The primary structure comprises 265 residues: Phosphatidylglycerol--prolipoprotein diacylglyceryl transferase (265 aa).

7 consecutive transmembrane segments (helical) span residues 17-37 (VAVRWYGLMYLLAFVLFVVLG), 57-77 (LLLYGVLGVIIGGRLGEVLFY), 89-109 (ILAVWKGGMSFHGGFLGVLVA), 127-147 (FIAPLVPTGLAAGRIGNFING), 176-196 (QLYQAAGEGLLLFAIVWVFAA), 201-218 (LRAVSAVFLIGYGSLRFV), and 233-253 (LVPGLSTAQWLCVPMVVVGLA). Residue arginine 140 coordinates a 1,2-diacyl-sn-glycero-3-phospho-(1'-sn-glycerol).

This sequence belongs to the Lgt family.

It localises to the cell inner membrane. It carries out the reaction L-cysteinyl-[prolipoprotein] + a 1,2-diacyl-sn-glycero-3-phospho-(1'-sn-glycerol) = an S-1,2-diacyl-sn-glyceryl-L-cysteinyl-[prolipoprotein] + sn-glycerol 1-phosphate + H(+). The protein operates within protein modification; lipoprotein biosynthesis (diacylglyceryl transfer). Catalyzes the transfer of the diacylglyceryl group from phosphatidylglycerol to the sulfhydryl group of the N-terminal cysteine of a prolipoprotein, the first step in the formation of mature lipoproteins. The chain is Phosphatidylglycerol--prolipoprotein diacylglyceryl transferase from Azoarcus sp. (strain BH72).